Consider the following 213-residue polypeptide: Charged multivesicular body protein 2b (213 aa).

Ala2 is modified (N-acetylalanine). A coiled-coil region spans residues 25-55 (QRAIIRDRAALEKQEKQLELEIKKMAKIGNK). Residues 178 to 202 (MAKAPSAARSLPSASTSKSTISDEE) form a disordered region. Over residues 179–194 (AKAPSAARSLPSASTS) the composition is skewed to low complexity. Ser199 carries the post-translational modification Phosphoserine. The MIT-interacting motif signature appears at 201–211 (EEIERQLKALG).

The protein belongs to the SNF7 family. As to quaternary structure, probable core component of the endosomal sorting required for transport complex III (ESCRT-III). ESCRT-III components are thought to multimerize to form a flat lattice on the perimeter membrane of the endosome. Several assembly forms of ESCRT-III may exist that interact and act sequentially. Interacts with CHMP2A. Interacts with VPS4A. Interacts with VPS4B; the interaction is direct.

It localises to the cytoplasm. The protein localises to the cytosol. The protein resides in the late endosome membrane. Its function is as follows. Probable core component of the endosomal sorting required for transport complex III (ESCRT-III) which is involved in multivesicular bodies (MVBs) formation and sorting of endosomal cargo proteins into MVBs. MVBs contain intraluminal vesicles (ILVs) that are generated by invagination and scission from the limiting membrane of the endosome and mostly are delivered to lysosomes enabling degradation of membrane proteins, such as stimulated growth factor receptors, lysosomal enzymes and lipids. The MVB pathway appears to require the sequential function of ESCRT-O, -I,-II and -III complexes. ESCRT-III proteins mostly dissociate from the invaginating membrane before the ILV is released. The ESCRT machinery also functions in topologically equivalent membrane fission events, such as the terminal stages of cytokinesis and the budding of enveloped viruses (lentiviruses). ESCRT-III proteins are believed to mediate the necessary vesicle extrusion and/or membrane fission activities, possibly in conjunction with the AAA ATPase VPS4. This Bos taurus (Bovine) protein is Charged multivesicular body protein 2b (CHMP2B).